Here is a 304-residue protein sequence, read N- to C-terminus: Ferrochelatase (304 aa).

Positions 169 and 241 each coordinate Fe cation.

Belongs to the ferrochelatase family.

It localises to the cytoplasm. It carries out the reaction heme b + 2 H(+) = protoporphyrin IX + Fe(2+). The protein operates within porphyrin-containing compound metabolism; protoheme biosynthesis; protoheme from protoporphyrin-IX: step 1/1. Catalyzes the ferrous insertion into protoporphyrin IX. This chain is Ferrochelatase, found in Thermoplasma volcanium (strain ATCC 51530 / DSM 4299 / JCM 9571 / NBRC 15438 / GSS1).